The primary structure comprises 100 residues: Urease subunit gamma (100 aa).

Belongs to the urease gamma subunit family. Heterotrimer of UreA (gamma), UreB (beta) and UreC (alpha) subunits. Three heterotrimers associate to form the active enzyme.

It localises to the cytoplasm. It carries out the reaction urea + 2 H2O + H(+) = hydrogencarbonate + 2 NH4(+). It participates in nitrogen metabolism; urea degradation; CO(2) and NH(3) from urea (urease route): step 1/1. The protein is Urease subunit gamma of Aliivibrio fischeri (strain ATCC 700601 / ES114) (Vibrio fischeri).